Reading from the N-terminus, the 490-residue chain is Cytochrome P450 2C25 (490 aa).

Cysteine 435 is a binding site for heme.

The protein belongs to the cytochrome P450 family. Heme serves as cofactor.

It localises to the endoplasmic reticulum membrane. It is found in the microsome membrane. The catalysed reaction is an organic molecule + reduced [NADPH--hemoprotein reductase] + O2 = an alcohol + oxidized [NADPH--hemoprotein reductase] + H2O + H(+). Catalyzes the hydroxylation of tolbutamide and the N-demethylation of aminopyrine and benzphetamine. Also has testosterone hydroxylase (16 beta) activity. The sequence is that of Cytochrome P450 2C25 (CYP2C25) from Mesocricetus auratus (Golden hamster).